The following is a 464-amino-acid chain: Glutamate--tRNA ligase (464 aa).

The 'HIGH' region motif lies at 10–20; that stretch reads PSPTGHLHLGG. Zn(2+) is bound by residues Cys99, Cys101, Cys126, and Glu128. The 'KMSKS' region motif lies at 236–240; it reads KLSKR. Position 239 (Lys239) interacts with ATP.

It belongs to the class-I aminoacyl-tRNA synthetase family. Glutamate--tRNA ligase type 1 subfamily. As to quaternary structure, monomer. Requires Zn(2+) as cofactor.

Its subcellular location is the cytoplasm. The catalysed reaction is tRNA(Glu) + L-glutamate + ATP = L-glutamyl-tRNA(Glu) + AMP + diphosphate. Its function is as follows. Catalyzes the attachment of glutamate to tRNA(Glu) in a two-step reaction: glutamate is first activated by ATP to form Glu-AMP and then transferred to the acceptor end of tRNA(Glu). The polypeptide is Glutamate--tRNA ligase (Oleidesulfovibrio alaskensis (strain ATCC BAA-1058 / DSM 17464 / G20) (Desulfovibrio alaskensis)).